The primary structure comprises 990 residues: Protein SUPPRESSOR OF MAX2 1 (990 aa).

One can recognise a Clp R domain in the interval 8–167 (IQQTLTPEAA…KATIEQSLNN (160 aa)). 2 repeat regions span residues 12-83 (LTPE…LERL) and 96-167 (ISNA…SLNN). A disordered region spans residues 818-855 (PKKEHGSGLSFDLNQAADTDDGSHNTSDLTTDNDQDEQ). The EAR signature appears at 828–832 (FDLNQ).

The protein belongs to the ClpA/ClpB family. Interacts probably with TPL/TPR in an EAR-motif dependent manner. Interacts with TPL, TPR1, TPR2 and TPR4. As to expression, highly expressed in dry seeds. Expressed in seedlings, rosette leaves and senescing leaves. Detected in roots and axillary shoots. Expressed in the primary rosette buds and expanding leaves of adult rosettes, the vasculature of the hypocotyls, cotyledons, and mature roots, in the midvein and petioles of young leaves, the young leaf periphery, stomata, and the root caps.

Its function is as follows. Probable component of a transcriptional corepressor complex that acts downstream of MAX2 to negatively regulate karrikins/strigolactone responses. Probable target of MAX2 during germination and seedling photomorphogenesis. Acts probably specifically in the karrikin pathway. The polypeptide is Protein SUPPRESSOR OF MAX2 1 (Arabidopsis thaliana (Mouse-ear cress)).